A 465-amino-acid chain; its full sequence is Cysteine--tRNA ligase (465 aa).

A Zn(2+)-binding site is contributed by Cys27. The short motif at 29 to 39 is the 'HIGH' region element; that stretch reads PTVYDDAHLGH. Residues Cys207, His237, and Glu241 each contribute to the Zn(2+) site. Positions 269 to 273 match the 'KMSKS' region motif; it reads KMSKS. Position 272 (Lys272) interacts with ATP.

It belongs to the class-I aminoacyl-tRNA synthetase family. As to quaternary structure, monomer. The cofactor is Zn(2+).

It localises to the cytoplasm. The catalysed reaction is tRNA(Cys) + L-cysteine + ATP = L-cysteinyl-tRNA(Cys) + AMP + diphosphate. The protein is Cysteine--tRNA ligase (cysS) of Helicobacter pylori (strain J99 / ATCC 700824) (Campylobacter pylori J99).